We begin with the raw amino-acid sequence, 438 residues long: MVQFYSPNRRTVNRHIITVTADNLDAQGQGVARHQGKTIFVAGLLPGEQAQVQLTEEKRQFAKAKLVKRLSDSPYRVNPRCPHFGVCGGCQQQHVAPDLQRESKASVLEHLIRRETGVTVSAKPVILGPEYGYRRRARLGLHYQIKQRQLVIGFRQNQSNELVAIKECPVLRPELEQLLQPLSQCLNSLKAVKRLGHVELVLADNGPLMILRHLDPLKREDKEKLGTFSVQHNVAVYLAADETSLESLNELPEPWYQVDGLKLVFSPRDFIQVNDQVNQQMVAQAIEWLDLQPNDNVLDLFCGMGNFTLPIGRIVQSVVGVEGVATLVANGQYNAKINNLDNISFCHENLEADIHHQPWAKLGFNKVLLDPARAGAVGVMSHIVELVPEKVVYVSCNPTTLARDSKILLEAGYQIISVRMLDMFPHTGHLESMALFSR.

The TRAM domain occupies 9 to 68 (RRTVNRHIITVTADNLDAQGQGVARHQGKTIFVAGLLPGEQAQVQLTEEKRQFAKAKLVK). Cysteine 81, cysteine 87, cysteine 90, and cysteine 168 together coordinate [4Fe-4S] cluster. 6 residues coordinate S-adenosyl-L-methionine: glutamine 272, phenylalanine 301, asparagine 306, glutamate 322, asparagine 349, and aspartate 370. Cysteine 396 functions as the Nucleophile in the catalytic mechanism.

It belongs to the class I-like SAM-binding methyltransferase superfamily. RNA M5U methyltransferase family. RlmD subfamily.

The enzyme catalyses uridine(1939) in 23S rRNA + S-adenosyl-L-methionine = 5-methyluridine(1939) in 23S rRNA + S-adenosyl-L-homocysteine + H(+). Functionally, catalyzes the formation of 5-methyl-uridine at position 1939 (m5U1939) in 23S rRNA. The polypeptide is 23S rRNA (uracil(1939)-C(5))-methyltransferase RlmD (Photorhabdus laumondii subsp. laumondii (strain DSM 15139 / CIP 105565 / TT01) (Photorhabdus luminescens subsp. laumondii)).